A 272-amino-acid polypeptide reads, in one-letter code: Regulatory protein RecX (272 aa).

The protein belongs to the RecX family.

The protein resides in the cytoplasm. Its function is as follows. Modulates RecA activity. In Staphylococcus aureus (strain Newman), this protein is Regulatory protein RecX.